The primary structure comprises 512 residues: 2-isopropylmalate synthase (512 aa).

Residues 4-266 enclose the Pyruvate carboxyltransferase domain; sequence IQFFDTTLRD…ETNIVLNQFK (263 aa). Mn(2+) is bound by residues aspartate 13, histidine 201, histidine 203, and asparagine 237. The regulatory domain stretch occupies residues 390–512; sequence ELKHLQVQYV…SKQADFEEVK (123 aa).

Belongs to the alpha-IPM synthase/homocitrate synthase family. LeuA type 1 subfamily. As to quaternary structure, homodimer. It depends on Mn(2+) as a cofactor.

The protein localises to the cytoplasm. It carries out the reaction 3-methyl-2-oxobutanoate + acetyl-CoA + H2O = (2S)-2-isopropylmalate + CoA + H(+). It participates in amino-acid biosynthesis; L-leucine biosynthesis; L-leucine from 3-methyl-2-oxobutanoate: step 1/4. In terms of biological role, catalyzes the condensation of the acetyl group of acetyl-CoA with 3-methyl-2-oxobutanoate (2-ketoisovalerate) to form 3-carboxy-3-hydroxy-4-methylpentanoate (2-isopropylmalate). This chain is 2-isopropylmalate synthase, found in Listeria monocytogenes serotype 4a (strain HCC23).